Consider the following 475-residue polypeptide: Ribulose bisphosphate carboxylase large chain (475 aa).

Residues 1–2 (MS) constitute a propeptide that is removed on maturation. An N-acetylproline modification is found at P3. Position 14 is an N6,N6,N6-trimethyllysine (K14). Residues N123 and T173 each coordinate substrate. Catalysis depends on K175, which acts as the Proton acceptor. A substrate-binding site is contributed by K177. Residues K201, D203, and E204 each contribute to the Mg(2+) site. K201 carries the N6-carboxylysine modification. The active-site Proton acceptor is the H294. Residues R295, H327, and S379 each contribute to the substrate site.

Belongs to the RuBisCO large chain family. Type I subfamily. Heterohexadecamer of 8 large chains and 8 small chains; disulfide-linked. The disulfide link is formed within the large subunit homodimers. It depends on Mg(2+) as a cofactor. In terms of processing, the disulfide bond which can form in the large chain dimeric partners within the hexadecamer appears to be associated with oxidative stress and protein turnover.

Its subcellular location is the plastid. The protein resides in the chloroplast. It catalyses the reaction 2 (2R)-3-phosphoglycerate + 2 H(+) = D-ribulose 1,5-bisphosphate + CO2 + H2O. The enzyme catalyses D-ribulose 1,5-bisphosphate + O2 = 2-phosphoglycolate + (2R)-3-phosphoglycerate + 2 H(+). In terms of biological role, ruBisCO catalyzes two reactions: the carboxylation of D-ribulose 1,5-bisphosphate, the primary event in carbon dioxide fixation, as well as the oxidative fragmentation of the pentose substrate in the photorespiration process. Both reactions occur simultaneously and in competition at the same active site. In Marchantia polymorpha (Common liverwort), this protein is Ribulose bisphosphate carboxylase large chain (rbcL).